Here is a 199-residue protein sequence, read N- to C-terminus: ATP synthase subunit a (199 aa).

Helical transmembrane passes span 2–22 (NQVY…LFYF), 53–73 (VISV…YFTY), 80–100 (MVEF…LTFI), 141–161 (LTVN…GLEL), and 169–189 (WLSI…SYIF).

Belongs to the ATPase A chain family. As to quaternary structure, F-type ATPases have 2 components, CF(1) - the catalytic core - and CF(0) - the membrane proton channel. CF(1) has five subunits: alpha(3), beta(3), gamma(1), delta(1), epsilon(1). CF(0) has three main subunits: a, b and c.

It is found in the mitochondrion inner membrane. Functionally, mitochondrial membrane ATP synthase (F(1)F(0) ATP synthase or Complex V) produces ATP from ADP in the presence of a proton gradient across the membrane which is generated by electron transport complexes of the respiratory chain. F-type ATPases consist of two structural domains, F(1) - containing the extramembraneous catalytic core and F(0) - containing the membrane proton channel, linked together by a central stalk and a peripheral stalk. During catalysis, ATP synthesis in the catalytic domain of F(1) is coupled via a rotary mechanism of the central stalk subunits to proton translocation. Key component of the proton channel; it may play a direct role in the translocation of protons across the membrane. This chain is ATP synthase subunit a (atp6), found in Caenorhabditis briggsae.